Consider the following 295-residue polypeptide: Protease HtpX (295 aa).

2 helical membrane-spanning segments follow: residues 4 to 24 and 41 to 61; these read ILLF…TLSL and GQLL…SLFI. His147 contacts Zn(2+). The active site involves Glu148. His151 serves as a coordination point for Zn(2+). 2 consecutive transmembrane segments (helical) span residues 158 to 178 and 198 to 218; these read VTMA…ARII and FVAT…IVMW. Residue Glu224 coordinates Zn(2+).

This sequence belongs to the peptidase M48B family. Requires Zn(2+) as cofactor.

The protein resides in the cell inner membrane. The protein is Protease HtpX of Pseudomonas entomophila (strain L48).